Reading from the N-terminus, the 279-residue chain is Shikimate dehydrogenase (NADP(+)) (279 aa).

Residues 21–23 (SMS) and T68 each bind shikimate. K72 serves as the catalytic Proton acceptor. Shikimate contacts are provided by N93 and D108. NADP(+)-binding positions include 130–134 (GAGGA) and L219. Residue Y221 coordinates shikimate. Residue G242 participates in NADP(+) binding.

The protein belongs to the shikimate dehydrogenase family. As to quaternary structure, homodimer.

It catalyses the reaction shikimate + NADP(+) = 3-dehydroshikimate + NADPH + H(+). Its pathway is metabolic intermediate biosynthesis; chorismate biosynthesis; chorismate from D-erythrose 4-phosphate and phosphoenolpyruvate: step 4/7. Functionally, involved in the biosynthesis of the chorismate, which leads to the biosynthesis of aromatic amino acids. Catalyzes the reversible NADPH linked reduction of 3-dehydroshikimate (DHSA) to yield shikimate (SA). The chain is Shikimate dehydrogenase (NADP(+)) from Oleidesulfovibrio alaskensis (strain ATCC BAA-1058 / DSM 17464 / G20) (Desulfovibrio alaskensis).